A 114-amino-acid chain; its full sequence is uncharacterized protein (114 aa).

This is an uncharacterized protein from Bacillus subtilis (strain 168).